We begin with the raw amino-acid sequence, 409 residues long: N-acetylglucosamine-6-phosphate deacetylase (409 aa).

Glu143 is a binding site for a divalent metal cation. Substrate is bound at residue 154–155 (AH). A divalent metal cation contacts are provided by His211 and His232. Residues 235–236 (NA), Arg243, and 269–272 (DGIH) contribute to the substrate site. Catalysis depends on Asp294, which acts as the Proton donor/acceptor. 328-330 (LGG) contacts substrate.

Belongs to the metallo-dependent hydrolases superfamily. NagA family. Requires a divalent metal cation as cofactor.

It carries out the reaction N-acetyl-D-glucosamine 6-phosphate + H2O = D-glucosamine 6-phosphate + acetate. The protein operates within amino-sugar metabolism; N-acetylneuraminate degradation. Its function is as follows. Hydrolyzes the N-glycolyl group from N-glycolylglucosamine 6-phosphate (GlcNGc-6-P) in the N-glycolylneuraminic acid (Neu5Gc) degradation pathway. This chain is N-acetylglucosamine-6-phosphate deacetylase (Amdhd2), found in Mus musculus (Mouse).